The sequence spans 67 residues: Large ribosomal subunit protein uL29c (67 aa).

It belongs to the universal ribosomal protein uL29 family.

Its subcellular location is the plastid. It is found in the chloroplast. In Porphyra purpurea (Red seaweed), this protein is Large ribosomal subunit protein uL29c (rpl29).